Consider the following 233-residue polypeptide: Urease accessory protein UreF (233 aa).

It belongs to the UreF family. In terms of assembly, ureD, UreF and UreG form a complex that acts as a GTP-hydrolysis-dependent molecular chaperone, activating the urease apoprotein by helping to assemble the nickel containing metallocenter of UreC. The UreE protein probably delivers the nickel.

Its subcellular location is the cytoplasm. Its function is as follows. Required for maturation of urease via the functional incorporation of the urease nickel metallocenter. This is Urease accessory protein UreF from Polaromonas sp. (strain JS666 / ATCC BAA-500).